Reading from the N-terminus, the 242-residue chain is Ribonuclease PH (242 aa).

Residues Arg87 and 125 to 127 each bind phosphate; that span reads STR.

It belongs to the RNase PH family. As to quaternary structure, homohexameric ring arranged as a trimer of dimers.

It catalyses the reaction tRNA(n+1) + phosphate = tRNA(n) + a ribonucleoside 5'-diphosphate. In terms of biological role, phosphorolytic 3'-5' exoribonuclease that plays an important role in tRNA 3'-end maturation. Removes nucleotide residues following the 3'-CCA terminus of tRNAs; can also add nucleotides to the ends of RNA molecules by using nucleoside diphosphates as substrates, but this may not be physiologically important. Probably plays a role in initiation of 16S rRNA degradation (leading to ribosome degradation) during starvation. The polypeptide is Ribonuclease PH (Synechococcus sp. (strain JA-3-3Ab) (Cyanobacteria bacterium Yellowstone A-Prime)).